A 359-amino-acid chain; its full sequence is Biotin synthase (359 aa).

Positions 67–302 constitute a Radical SAM core domain; that stretch reads CCGNRVDLCS…QQILRYAGGR (236 aa). 3 residues coordinate [4Fe-4S] cluster: C85, C89, and C92. The [2Fe-2S] cluster site is built by C130, C167, C227, and R297.

It belongs to the radical SAM superfamily. Biotin synthase family. In terms of assembly, homodimer. Requires [4Fe-4S] cluster as cofactor. It depends on [2Fe-2S] cluster as a cofactor.

The catalysed reaction is (4R,5S)-dethiobiotin + (sulfur carrier)-SH + 2 reduced [2Fe-2S]-[ferredoxin] + 2 S-adenosyl-L-methionine = (sulfur carrier)-H + biotin + 2 5'-deoxyadenosine + 2 L-methionine + 2 oxidized [2Fe-2S]-[ferredoxin]. It participates in cofactor biosynthesis; biotin biosynthesis; biotin from 7,8-diaminononanoate: step 2/2. Its function is as follows. Catalyzes the conversion of dethiobiotin (DTB) to biotin by the insertion of a sulfur atom into dethiobiotin via a radical-based mechanism. The polypeptide is Biotin synthase (Gloeothece citriformis (strain PCC 7424) (Cyanothece sp. (strain PCC 7424))).